The primary structure comprises 757 residues: Transmembrane channel-like protein 1 (757 aa).

The segment at 1 to 74 (MLQIQVEEKE…RRRLRRGAEE (74 aa)) is disordered. Over 1 to 176 (MLQIQVEEKE…KIKAIESQFG (176 aa)) the chain is Cytoplasmic. A compositionally biased stretch (acidic residues) spans 8–23 (EKEEDTEESSSEEEED). Serine 30 carries the phosphoserine modification. Threonine 38 carries the post-translational modification Phosphothreonine. The segment covering 43 to 54 (NEDDPEPEPEDE) has biased composition (acidic residues). The required for interaction with CIB2 stretch occupies residues 81–130 (EELERLKALLDENRQMIATVKCKPWKMEKKIEVLKEAKKFVSENEGALGK). Serine 122 carries the phosphoserine modification. The chain crosses the membrane as a helical span at residues 177 to 214 (SSVASYFLFLRWMYGVNMVLFVLTFSLIMLPEYLWGLP). Residues 215 to 265 (YGSLPRKTVPRAEEASAANFGVLYDFNGLAQYSVLFYGYYDNKRTIGWLNF) are Extracellular-facing. A helical membrane pass occupies residues 266–297 (RLPLSYFLVGIMCIGYSFLVVLKAMTKNIGDD). Positions 298–352 (GGGDDNTFNFSWKVFCSWDYLIGNPETADNKFNSITMNFKEAIIEERAAQVEENI) are required for interaction with CIB2. Topologically, residues 298–353 (GGGDDNTFNFSWKVFCSWDYLIGNPETADNKFNSITMNFKEAIIEERAAQVEENIH) are cytoplasmic. Phosphoserine is present on serine 308. Residues 354 to 384 (LIRFLRFLANFFVFLTLGASGYLIFWAVKRS) form a helical membrane-spanning segment. Residues 385–396 (QEFAQQDPDTLG) are Extracellular-facing. Phosphothreonine is present on threonine 394. A helical membrane pass occupies residues 397–424 (WWEKNEMNMVMSLLGMFCPTLFDLFAEL). The Cytoplasmic segment spans residues 425–428 (EDYH). A helical transmembrane segment spans residues 429 to 463 (PLIALKWLLGRIFALLLGNLYVFILALMDEINNKI). Residues 464-512 (EEEKLVKANITLWEANMIKAYNESLSGLSGNTTGAPFFVHPADVPRGPC) lie on the Extracellular side of the membrane. The helical transmembrane segment at 513–550 (WETMVGQEFVRLTVSDVLTTYVTILIGDFLRACFVRFC) threads the bilayer. Residues 551-569 (NYCWCWDLEYGYPSYTEFD) lie on the Cytoplasmic side of the membrane. A helical transmembrane segment spans residues 570-590 (ISGNVLALIFNQGMIWMGSFF). The Extracellular portion of the chain corresponds to 591 to 593 (APS). A helical membrane pass occupies residues 594–616 (LPGINILRLHTSMYFQCWAVMCC). Over 617 to 630 (NVPEARVFKASRSN) the chain is Cytoplasmic. The chain crosses the membrane as a helical span at residues 631–654 (NFYLGMLLLILFLSTMPVLYMIVS). The Extracellular portion of the chain corresponds to 655-697 (LPPSFDCGPFSGKNRMFEVIGETLEHDFPSWMAKILRQLSNPG). The chain crosses the membrane as a helical span at residues 698-731 (LVIAVILVMVLTIYYLNATAKGQKAANLDLKKKM). Topologically, residues 732–757 (KQQALENKMRNKKMAAARAAAAAGGQ) are cytoplasmic.

This sequence belongs to the TMC family. Forms the MET channel composed of TMC dimer (TMC1 or TMC2), TMIE, TOMT, CIB (CIB2 or CIB3), LHFPL5 and PCDH15. Interacts with PIEZO1 and PIEZO2; the interaction may be part of the MET complex. The interaction of TMC1 and TMC2 with TOMT is required for the transportation of TMC1/2 into the stereocilia of hair cells. Interacts (via N-terminus) with both isoforms CD1 and CD3 of PCDH15. Can form a heterodimer with TMC2, TMC5 or TMC7. As to expression, detected in cochlear inner and outer hair cells and in neurosensory epithelia of the vestibular end organs. Also expressed in cortex, cerebellum, eye, colon, ovary and testis.

It is found in the cell membrane. It carries out the reaction Ca(2+)(in) = Ca(2+)(out). In terms of biological role, pore-forming subunit of the mechanotransducer (MET) non-selective cation channel complex located at the tips of stereocilia of cochlear hair cells and that mediates sensory transduction in the auditory system. The MET complex is composed of two dimeric pore-forming ion-conducting transmembrane TMC (TMC1 or TMC2) subunits, several auxiliary proteins including LHFPL5, TMIE, CIB2/3 and TOMT, the tip-link PCDH15, and possibly the PIEZO subunits. MET channel is activated by tension in the tip-link extending from the side wall of one stereocilium to the tip of the adjacent shorter stereocilium, where the channel is located. TMC1 MET channel is highly permeable to calcium and likely transports monovalent cations. Also involved in vestibular hair cells transduction current. The sequence is that of Transmembrane channel-like protein 1 from Mus musculus (Mouse).